A 320-amino-acid chain; its full sequence is Lipoyl synthase (320 aa).

[4Fe-4S] cluster contacts are provided by cysteine 67, cysteine 72, cysteine 78, cysteine 93, cysteine 97, cysteine 100, and serine 307. The region spanning 79-296 (FNHGTATFMI…RDKANEMGFE (218 aa)) is the Radical SAM core domain.

This sequence belongs to the radical SAM superfamily. Lipoyl synthase family. The cofactor is [4Fe-4S] cluster.

The protein localises to the cytoplasm. It catalyses the reaction [[Fe-S] cluster scaffold protein carrying a second [4Fe-4S](2+) cluster] + N(6)-octanoyl-L-lysyl-[protein] + 2 oxidized [2Fe-2S]-[ferredoxin] + 2 S-adenosyl-L-methionine + 4 H(+) = [[Fe-S] cluster scaffold protein] + N(6)-[(R)-dihydrolipoyl]-L-lysyl-[protein] + 4 Fe(3+) + 2 hydrogen sulfide + 2 5'-deoxyadenosine + 2 L-methionine + 2 reduced [2Fe-2S]-[ferredoxin]. Its pathway is protein modification; protein lipoylation via endogenous pathway; protein N(6)-(lipoyl)lysine from octanoyl-[acyl-carrier-protein]: step 2/2. Functionally, catalyzes the radical-mediated insertion of two sulfur atoms into the C-6 and C-8 positions of the octanoyl moiety bound to the lipoyl domains of lipoate-dependent enzymes, thereby converting the octanoylated domains into lipoylated derivatives. The protein is Lipoyl synthase of Haemophilus influenzae (strain PittEE).